We begin with the raw amino-acid sequence, 126 residues long: uncharacterized protein (126 aa).

The helical transmembrane segment at 48-68 threads the bilayer; it reads ILCMFPWQCVVYVFSNFVWLV.

It localises to the membrane. This is an uncharacterized protein from Homo sapiens (Human).